The following is a 335-amino-acid chain: Ornithine carbamoyltransferase (335 aa).

Residues 56–59, Q83, R107, and 134–137 each bind carbamoyl phosphate; these read STRT and HPTQ. Residues N168, D232, and 236–237 each bind L-ornithine; that span reads SM. Carbamoyl phosphate-binding positions include 274 to 275 and R320; that span reads CL.

The protein belongs to the aspartate/ornithine carbamoyltransferase superfamily. OTCase family.

The protein resides in the cytoplasm. It catalyses the reaction carbamoyl phosphate + L-ornithine = L-citrulline + phosphate + H(+). It functions in the pathway amino-acid biosynthesis; L-arginine biosynthesis; L-arginine from L-ornithine and carbamoyl phosphate: step 1/3. Functionally, reversibly catalyzes the transfer of the carbamoyl group from carbamoyl phosphate (CP) to the N(epsilon) atom of ornithine (ORN) to produce L-citrulline. The sequence is that of Ornithine carbamoyltransferase from Pectobacterium atrosepticum (strain SCRI 1043 / ATCC BAA-672) (Erwinia carotovora subsp. atroseptica).